Here is a 495-residue protein sequence, read N- to C-terminus: Trigger factor (495 aa).

Residues glycine 169–valine 254 enclose the PPIase FKBP-type domain. The tract at residues alanine 439–glutamate 495 is disordered.

It belongs to the FKBP-type PPIase family. Tig subfamily.

It is found in the cytoplasm. It catalyses the reaction [protein]-peptidylproline (omega=180) = [protein]-peptidylproline (omega=0). Functionally, involved in protein export. Acts as a chaperone by maintaining the newly synthesized protein in an open conformation. Functions as a peptidyl-prolyl cis-trans isomerase. The chain is Trigger factor from Rhizobium rhizogenes (strain K84 / ATCC BAA-868) (Agrobacterium radiobacter).